Consider the following 327-residue polypeptide: Ribosomal RNA small subunit methyltransferase H (327 aa).

Residues 42-44 (GGH), aspartate 61, leucine 95, aspartate 109, and glutamine 116 contribute to the S-adenosyl-L-methionine site.

The protein belongs to the methyltransferase superfamily. RsmH family.

It localises to the cytoplasm. It carries out the reaction cytidine(1402) in 16S rRNA + S-adenosyl-L-methionine = N(4)-methylcytidine(1402) in 16S rRNA + S-adenosyl-L-homocysteine + H(+). Functionally, specifically methylates the N4 position of cytidine in position 1402 (C1402) of 16S rRNA. This chain is Ribosomal RNA small subunit methyltransferase H, found in Desulfovibrio desulfuricans (strain ATCC 27774 / DSM 6949 / MB).